The chain runs to 376 residues: Lipoprotein p33 (376 aa).

Residues 1-30 form the signal peptide; sequence MKIKKIKLLKALALTGAFGIVATVPVIVYS. Cys-31 carries the N-palmitoyl cysteine lipid modification. A lipid anchor (S-diacylglycerol cysteine) is attached at Cys-31. A disordered region spans residues 35–59; it reads DNNGGTGDNNTGGGGSGTDQQQGTT. Over residues 38-51 the composition is skewed to gly residues; the sequence is GGTGDNNTGGGGSG.

Belongs to the p35 lipoprotein family.

It is found in the cell membrane. This is Lipoprotein p33 from Malacoplasma penetrans (Mycoplasma penetrans).